The chain runs to 280 residues: Nucleotide-binding protein Dgeo_0723 (280 aa).

Residue 8–15 coordinates ATP; sequence GLSGSGKS. A GTP-binding site is contributed by 57–60; that stretch reads DART.

The protein belongs to the RapZ-like family.

Displays ATPase and GTPase activities. In Deinococcus geothermalis (strain DSM 11300 / CIP 105573 / AG-3a), this protein is Nucleotide-binding protein Dgeo_0723.